The sequence spans 302 residues: MDGILPLYKERGMTSNDAVIKCRKIFKTRKIGHSGTLDPEVDGVLPICVGKATKVVNYLMDSGKVYKGEITLGFATTTEDLEGEVISKVKLSEPFSDEKINEILSSFIGDIIQVPPIYSAIKVNGKKLYEYARAGEKVDIPERRVHIEYFKQIFPSKFDKEKGQQTIYFEVGCGKGTYVRTLAVDVGKKLGVPAVMSDLTRLKSGGFQIGMAKSLSQLEKLAHENKLSESLYPIDYAVKDLPRYDLKLEQWRIVKNGGFLSVNTFKEDYDRVNLFYDDRIRCIYQYNKEKNRYQSERMIDLS.

D38 functions as the Nucleophile in the catalytic mechanism.

It belongs to the pseudouridine synthase TruB family. Type 1 subfamily.

The catalysed reaction is uridine(55) in tRNA = pseudouridine(55) in tRNA. Responsible for synthesis of pseudouridine from uracil-55 in the psi GC loop of transfer RNAs. In Ligilactobacillus salivarius (strain UCC118) (Lactobacillus salivarius), this protein is tRNA pseudouridine synthase B.